The following is a 291-amino-acid chain: ATP synthase gamma chain (291 aa).

It belongs to the ATPase gamma chain family. In terms of assembly, F-type ATPases have 2 components, CF(1) - the catalytic core - and CF(0) - the membrane proton channel. CF(1) has five subunits: alpha(3), beta(3), gamma(1), delta(1), epsilon(1). CF(0) has three main subunits: a, b and c.

The protein localises to the cell inner membrane. Functionally, produces ATP from ADP in the presence of a proton gradient across the membrane. The gamma chain is believed to be important in regulating ATPase activity and the flow of protons through the CF(0) complex. The sequence is that of ATP synthase gamma chain from Burkholderia cenocepacia (strain ATCC BAA-245 / DSM 16553 / LMG 16656 / NCTC 13227 / J2315 / CF5610) (Burkholderia cepacia (strain J2315)).